The primary structure comprises 223 residues: Uracil-DNA glycosylase (223 aa).

Asp67 (proton acceptor) is an active-site residue.

Belongs to the uracil-DNA glycosylase (UDG) superfamily. UNG family.

The protein localises to the cytoplasm. The catalysed reaction is Hydrolyzes single-stranded DNA or mismatched double-stranded DNA and polynucleotides, releasing free uracil.. In terms of biological role, excises uracil residues from the DNA which can arise as a result of misincorporation of dUMP residues by DNA polymerase or due to deamination of cytosine. This is Uracil-DNA glycosylase from Borrelia hermsii (strain HS1 / DAH).